The primary structure comprises 493 residues: UDP-N-acetylmuramoyl-L-alanyl-D-glutamate--2,6-diaminopimelate ligase (493 aa).

A UDP-N-acetyl-alpha-D-muramoyl-L-alanyl-D-glutamate-binding site is contributed by threonine 32. Residue 110-116 coordinates ATP; sequence GTNGKTT. Residues asparagine 151, 152 to 153, serine 179, and arginine 187 each bind UDP-N-acetyl-alpha-D-muramoyl-L-alanyl-D-glutamate; that span reads TT. N6-carboxylysine is present on lysine 219. Meso-2,6-diaminopimelate-binding positions include arginine 386, 410–413, glycine 460, and glutamate 464; that span reads DNPR. The short motif at 410–413 is the Meso-diaminopimelate recognition motif element; it reads DNPR.

It belongs to the MurCDEF family. MurE subfamily. The cofactor is Mg(2+). Carboxylation is probably crucial for Mg(2+) binding and, consequently, for the gamma-phosphate positioning of ATP.

It localises to the cytoplasm. The enzyme catalyses UDP-N-acetyl-alpha-D-muramoyl-L-alanyl-D-glutamate + meso-2,6-diaminopimelate + ATP = UDP-N-acetyl-alpha-D-muramoyl-L-alanyl-gamma-D-glutamyl-meso-2,6-diaminopimelate + ADP + phosphate + H(+). It functions in the pathway cell wall biogenesis; peptidoglycan biosynthesis. Catalyzes the addition of meso-diaminopimelic acid to the nucleotide precursor UDP-N-acetylmuramoyl-L-alanyl-D-glutamate (UMAG) in the biosynthesis of bacterial cell-wall peptidoglycan. This Lactiplantibacillus plantarum (strain ATCC BAA-793 / NCIMB 8826 / WCFS1) (Lactobacillus plantarum) protein is UDP-N-acetylmuramoyl-L-alanyl-D-glutamate--2,6-diaminopimelate ligase.